The following is a 208-amino-acid chain: Recombination protein RecR (208 aa).

A C4-type zinc finger spans residues 60 to 75; the sequence is CKVCHNICDDEVCSIC. A Toprim domain is found at 83–178; that stretch reads SLVCVVENIK…RISVIARGVS (96 aa).

The protein belongs to the RecR family.

Its function is as follows. May play a role in DNA repair. It seems to be involved in an RecBC-independent recombinational process of DNA repair. It may act with RecF and RecO. This is Recombination protein RecR from Parabacteroides distasonis (strain ATCC 8503 / DSM 20701 / CIP 104284 / JCM 5825 / NCTC 11152).